The following is a 115-amino-acid chain: Migration and invasion enhancer 1 (115 aa).

A compositionally biased stretch (polar residues) spans 1–10 (MSGDTGTTSV). Positions 1–22 (MSGDTGTTSVAPPPGETEPGHG) are disordered. N-acetylserine is present on S2. Cysteines 30 and 33 form a disulfide. C112 carries S-geranylgeranyl cysteine lipidation. The propeptide at 113–115 (VIL) is removed in mature form.

The protein belongs to the SelWTH family. Interacts with GPX1. Post-translationally, isoprenylation facilitates association with the plasma membrane and enhances the migratory phenotype of cells by inducing increased filopodia formation.

It is found in the cytoplasm. It localises to the cytosol. The protein localises to the cell membrane. In terms of biological role, increases cell migration by inducing filopodia formation at the leading edge of migrating cells. Plays a role in regulation of apoptosis, possibly through control of CASP3. May be involved in a redox-related process. This chain is Migration and invasion enhancer 1 (MIEN1), found in Bos taurus (Bovine).